The sequence spans 671 residues: Preterminal protein (671 aa).

The Nuclear localization signal signature appears at 380-389 (RLPVRRRRRR). The segment at 386–409 (RRRRVPPPPPPPEEEEEGEALMEE) is disordered. Acidic residues predominate over residues 397 to 409 (PEEEEEGEALMEE). Ser-580 carries the O-(5'-phospho-DNA)-serine modification. Positions 645–671 (GADVPLPPLPAGPEPPLPPGARPRHRF) are disordered. Pro residues predominate over residues 649–665 (PLPPLPAGPEPPLPPGA).

It belongs to the adenoviridae terminal protein family. Heterodimer with the polymerase; this heterodimer binds to bp 9 to 18 of the genome. Interacts with host POU2F1; POU2F1 binds to the auxiliary sequences in the inverted terminal repeats and tethers the pTP-POL heterodimer to the origin DNA thereby participating in the assembly of the pre-initiation complex (POL-TP-DBP-NFIA-POU2F1). Post-translationally, preterminal protein is used to replicate viral genome, upon genomic encapsidation it is processed first into iTP and finally into TP by adenovirus protease.

It localises to the host nucleus matrix. Protein covalently bound to the viral DNA that acts as a primer for viral genomic replication by DNA strand displacement. Assembles on the viral origin of replication in an initiation complex with viral polymerase, DBP, host NFIA and host POU2F1/OCT1. During initiation, the polymerase covalently couples the first dCTP with Ser-580 of pTP. The terminal protein stimulates the template activity over 20 fold compared to protein-free templates. Neo-synthesized viral genomes are linked to two preterminal proteins, one for each 5' end. These new genomes are encapsidated in the nucleus, and during capsid maturation by viral protease, preterminal protein is first cleaved into intermediary (iTP), then into mature TP. May play a role in host nuclear matrix localization of genomic DNA. The sequence is that of Preterminal protein from Homo sapiens (Human).